Here is a 32-residue protein sequence, read N- to C-terminus: Secreted protein F2 (32 aa).

It localises to the secreted. In Globisporangium hypogynum (Pythium hypogynum), this protein is Secreted protein F2.